Reading from the N-terminus, the 407-residue chain is Glucose-1-phosphate adenylyltransferase 2 (407 aa).

Alpha-D-glucose 1-phosphate-binding positions include Tyr97, Gly162, Glu177–Lys178, and Ser195.

The protein belongs to the bacterial/plant glucose-1-phosphate adenylyltransferase family. As to quaternary structure, homotetramer.

The enzyme catalyses alpha-D-glucose 1-phosphate + ATP + H(+) = ADP-alpha-D-glucose + diphosphate. It functions in the pathway glycan biosynthesis; glycogen biosynthesis. In terms of biological role, involved in the biosynthesis of ADP-glucose, a building block required for the elongation reactions to produce glycogen. Catalyzes the reaction between ATP and alpha-D-glucose 1-phosphate (G1P) to produce pyrophosphate and ADP-Glc. The chain is Glucose-1-phosphate adenylyltransferase 2 from Vibrio cholerae serotype O1 (strain ATCC 39315 / El Tor Inaba N16961).